Reading from the N-terminus, the 57-residue chain is Large ribosomal subunit protein bL32 (57 aa).

The segment at 1 to 37 (MAVQQNKPTRSKRGMRRSHDALTAVTSLSVDKTSGEK) is disordered.

The protein belongs to the bacterial ribosomal protein bL32 family.

In Escherichia fergusonii (strain ATCC 35469 / DSM 13698 / CCUG 18766 / IAM 14443 / JCM 21226 / LMG 7866 / NBRC 102419 / NCTC 12128 / CDC 0568-73), this protein is Large ribosomal subunit protein bL32.